Consider the following 675-residue polypeptide: G-protein coupled receptor moody (675 aa).

Topologically, residues 1 to 44 (MSDETTGSLGDAFSPMDTPTTTIMPPPADVDESGFSHSLLTFAA) are extracellular. A helical transmembrane segment spans residues 45–65 (VMTFLIMIVGICGNLLTVVAL). Topologically, residues 66–73 (LKCPKVRN) are cytoplasmic. Residues 74–94 (VAAAFIISLCIADLLFCALVL) traverse the membrane as a helical segment. The Extracellular segment spans residues 95–115 (PFQGLRFVQGTWRHGEVLCRL). Cysteine 113 and cysteine 192 form a disulfide bridge. The chain crosses the membrane as a helical span at residues 116-136 (IPFIQYGNIGVSLLCIAMITI). Residues 137–156 (NRYVMITHYSLYNRIYKRHW) are Cytoplasmic-facing. A helical membrane pass occupies residues 157–177 (IAIMIAACWLFSYGMQLPTLL). Residues 178–206 (GAWGRFGYDARLQTCSIMSDRHGHSSKTT) are Extracellular-facing. Residues 207–227 (LFITAFVIPCLVIIACYAKIF) form a helical membrane-spanning segment. The Cytoplasmic portion of the chain corresponds to 228–327 (WVVHKSEQRL…AKRNEWRITK (100 aa)). The segment at 258–316 (TSMPSGDGANPSQVPAGCRVSSDSSSNYSTDVPDTTPGGAGGGAGVKQQPSRVKDQREV) is disordered. The segment covering 278–294 (SSDSSSNYSTDVPDTTP) has biased composition (low complexity). Residues 328 to 348 (MVLAIFLSFVICYLPITIVKV) traverse the membrane as a helical segment. Over 349-359 (ADKDVEHPSLH) the chain is Extracellular. Residues 360 to 380 (IFSYIMLYLSACINPIIYVIM) form a helical membrane-spanning segment. Over 381–675 (NKQYRKAYKT…LMDKKKFPKD (295 aa)) the chain is Cytoplasmic. 2 disordered regions span residues 475–568 (SKSS…GNGS) and 588–675 (LPPT…FPKD). Positions 536 to 551 (SSVISANPSSSPSPSS) are enriched in low complexity. The segment covering 552 to 565 (SGGGIYRPGIGSMG) has biased composition (gly residues). The segment covering 666–675 (LMDKKKFPKD) has biased composition (basic and acidic residues).

Belongs to the G-protein coupled receptor 1 family.

It localises to the cell membrane. In terms of biological role, required in glia to regulate the acute sensitivity to cocaine and to continuously maintain the proper blood-brain barrier (BBB) function. A moody-mediated signaling pathway functions in glia to regulate nervous system insulation and drug-related behaviors. The sequence is that of G-protein coupled receptor moody from Drosophila pseudoobscura pseudoobscura (Fruit fly).